An 85-amino-acid chain; its full sequence is NAD(P)H-quinone oxidoreductase subunit O (85 aa).

This sequence belongs to the complex I NdhO subunit family. NDH-1 can be composed of about 15 different subunits; different subcomplexes with different compositions have been identified which probably have different functions.

It localises to the cellular thylakoid membrane. The catalysed reaction is a plastoquinone + NADH + (n+1) H(+)(in) = a plastoquinol + NAD(+) + n H(+)(out). It carries out the reaction a plastoquinone + NADPH + (n+1) H(+)(in) = a plastoquinol + NADP(+) + n H(+)(out). Its function is as follows. NDH-1 shuttles electrons from an unknown electron donor, via FMN and iron-sulfur (Fe-S) centers, to quinones in the respiratory and/or the photosynthetic chain. The immediate electron acceptor for the enzyme in this species is believed to be plastoquinone. Couples the redox reaction to proton translocation, and thus conserves the redox energy in a proton gradient. Cyanobacterial NDH-1 also plays a role in inorganic carbon-concentration. The chain is NAD(P)H-quinone oxidoreductase subunit O from Synechococcus sp. (strain WH7803).